Here is a 30-residue protein sequence, read N- to C-terminus: Basic phospholipase A2 CM-I (30 aa).

The protein belongs to the phospholipase A2 family. Group I subfamily. Ca(2+) serves as cofactor. Expressed by the venom gland.

The protein resides in the secreted. The catalysed reaction is a 1,2-diacyl-sn-glycero-3-phosphocholine + H2O = a 1-acyl-sn-glycero-3-phosphocholine + a fatty acid + H(+). Functionally, snake venom phospholipase A2 (PLA2) that shows weak anticoagulant activity. Is more catalytically active than the strong anticoagulant protein CM-IV found in this venom. Acts by inhibiting the complex composed of tissue factor (F3) and coagulation factor VIIa (F7) (TF-VIIa complex) by only enzymatic mechanism. PLA2 catalyzes the calcium-dependent hydrolysis of the 2-acyl groups in 3-sn-phosphoglycerides. In Naja nigricollis (Black-necked spitting cobra), this protein is Basic phospholipase A2 CM-I.